A 208-amino-acid polypeptide reads, in one-letter code: NADH-ubiquinone oxidoreductase chain 4 (208 aa).

The next 6 helical transmembrane spans lie at 23–43 (VWINVTTYSLLINLISINLLW), 60–80 (PLSAPLLVLTTWLLPLMLLAS), 93–113 (KLYISLLVCLQTLLIMTFSAN), 114–134 (ELIMFYILFEATLIPTLIIIT), 147–167 (IYFLFYTLVGSIPLLIALIYI), and 185–205 (PINQTWSNNILWLACIMAFMV).

The protein belongs to the complex I subunit 4 family. As to quaternary structure, core subunit of respiratory chain NADH dehydrogenase (Complex I) which is composed of 45 different subunits.

It is found in the mitochondrion inner membrane. It carries out the reaction a ubiquinone + NADH + 5 H(+)(in) = a ubiquinol + NAD(+) + 4 H(+)(out). In terms of biological role, core subunit of the mitochondrial membrane respiratory chain NADH dehydrogenase (Complex I) which catalyzes electron transfer from NADH through the respiratory chain, using ubiquinone as an electron acceptor. Essential for the catalytic activity and assembly of complex I. The polypeptide is NADH-ubiquinone oxidoreductase chain 4 (MT-ND4) (Microtus pennsylvanicus (Meadow vole)).